The primary structure comprises 367 residues: Queuine tRNA-ribosyltransferase (367 aa).

The Proton acceptor role is filled by aspartate 89. Residues aspartate 89–phenylalanine 93, aspartate 143, glutamine 187, and glycine 214 contribute to the substrate site. The RNA binding stretch occupies residues glycine 245 to aspartate 251. The active-site Nucleophile is the aspartate 264. An RNA binding; important for wobble base 34 recognition region spans residues threonine 269–arginine 273. Zn(2+) is bound by residues cysteine 302, cysteine 304, cysteine 307, and histidine 333.

Belongs to the queuine tRNA-ribosyltransferase family. Homodimer. Within each dimer, one monomer is responsible for RNA recognition and catalysis, while the other monomer binds to the replacement base PreQ1. Zn(2+) serves as cofactor.

It carries out the reaction 7-aminomethyl-7-carbaguanine + guanosine(34) in tRNA = 7-aminomethyl-7-carbaguanosine(34) in tRNA + guanine. The protein operates within tRNA modification; tRNA-queuosine biosynthesis. Its function is as follows. Catalyzes the base-exchange of a guanine (G) residue with the queuine precursor 7-aminomethyl-7-deazaguanine (PreQ1) at position 34 (anticodon wobble position) in tRNAs with GU(N) anticodons (tRNA-Asp, -Asn, -His and -Tyr). Catalysis occurs through a double-displacement mechanism. The nucleophile active site attacks the C1' of nucleotide 34 to detach the guanine base from the RNA, forming a covalent enzyme-RNA intermediate. The proton acceptor active site deprotonates the incoming PreQ1, allowing a nucleophilic attack on the C1' of the ribose to form the product. After dissociation, two additional enzymatic reactions on the tRNA convert PreQ1 to queuine (Q), resulting in the hypermodified nucleoside queuosine (7-(((4,5-cis-dihydroxy-2-cyclopenten-1-yl)amino)methyl)-7-deazaguanosine). In Nitrosospira multiformis (strain ATCC 25196 / NCIMB 11849 / C 71), this protein is Queuine tRNA-ribosyltransferase.